The following is a 288-amino-acid chain: Bis(5'-nucleosyl)-tetraphosphatase, symmetrical (288 aa).

Belongs to the Ap4A hydrolase family.

The enzyme catalyses P(1),P(4)-bis(5'-adenosyl) tetraphosphate + H2O = 2 ADP + 2 H(+). Hydrolyzes diadenosine 5',5'''-P1,P4-tetraphosphate to yield ADP. The sequence is that of Bis(5'-nucleosyl)-tetraphosphatase, symmetrical from Pseudomonas putida (strain W619).